The following is a 273-amino-acid chain: Putative pyruvate, phosphate dikinase regulatory protein (273 aa).

Position 153–160 (153–160 (GISRTSKT)) interacts with ADP.

The protein belongs to the pyruvate, phosphate/water dikinase regulatory protein family. PDRP subfamily.

It carries out the reaction N(tele)-phospho-L-histidyl/L-threonyl-[pyruvate, phosphate dikinase] + ADP = N(tele)-phospho-L-histidyl/O-phospho-L-threonyl-[pyruvate, phosphate dikinase] + AMP + H(+). It catalyses the reaction N(tele)-phospho-L-histidyl/O-phospho-L-threonyl-[pyruvate, phosphate dikinase] + phosphate + H(+) = N(tele)-phospho-L-histidyl/L-threonyl-[pyruvate, phosphate dikinase] + diphosphate. Functionally, bifunctional serine/threonine kinase and phosphorylase involved in the regulation of the pyruvate, phosphate dikinase (PPDK) by catalyzing its phosphorylation/dephosphorylation. The protein is Putative pyruvate, phosphate dikinase regulatory protein of Rhizobium johnstonii (strain DSM 114642 / LMG 32736 / 3841) (Rhizobium leguminosarum bv. viciae).